The following is a 268-amino-acid chain: 3-methyl-2-oxobutanoate hydroxymethyltransferase (268 aa).

Mg(2+)-binding residues include D46 and D85. 3-methyl-2-oxobutanoate contacts are provided by residues 46–47, D85, and K115; that span reads DS. E117 contacts Mg(2+). E184 functions as the Proton acceptor in the catalytic mechanism.

This sequence belongs to the PanB family. As to quaternary structure, homodecamer; pentamer of dimers. Mg(2+) serves as cofactor.

Its subcellular location is the cytoplasm. The enzyme catalyses 3-methyl-2-oxobutanoate + (6R)-5,10-methylene-5,6,7,8-tetrahydrofolate + H2O = 2-dehydropantoate + (6S)-5,6,7,8-tetrahydrofolate. It participates in cofactor biosynthesis; (R)-pantothenate biosynthesis; (R)-pantoate from 3-methyl-2-oxobutanoate: step 1/2. In terms of biological role, catalyzes the reversible reaction in which hydroxymethyl group from 5,10-methylenetetrahydrofolate is transferred onto alpha-ketoisovalerate to form ketopantoate. The protein is 3-methyl-2-oxobutanoate hydroxymethyltransferase of Magnetococcus marinus (strain ATCC BAA-1437 / JCM 17883 / MC-1).